The sequence spans 151 residues: Aspartate carbamoyltransferase regulatory chain (151 aa).

Zn(2+) contacts are provided by Cys-107, Cys-112, Cys-135, and Cys-138.

It belongs to the PyrI family. Contains catalytic and regulatory chains. Requires Zn(2+) as cofactor.

In terms of biological role, involved in allosteric regulation of aspartate carbamoyltransferase. This Thermococcus onnurineus (strain NA1) protein is Aspartate carbamoyltransferase regulatory chain.